A 268-amino-acid chain; its full sequence is Phosphatidylglycerol--prolipoprotein diacylglyceryl transferase (268 aa).

A run of 7 helical transmembrane segments spans residues 27 to 47 (PALRWYGFTYLVGFVAAMWLL), 66 to 86 (LLFYGFLGVILGGRIGYVLFY), 104 to 124 (GGMSFHGGLMGVITAMIYIAW), 130 to 150 (FFAVADMVAPVVPIGLGAGRI), 181 to 201 (PSQLYQFALEGVALFLLLYWF), 208 to 228 (VGAVSGMFLLGYGIFRVIVET), and 242 to 262 (FMTMGQILSVPMILFGLYLIL). R149 is a binding site for a 1,2-diacyl-sn-glycero-3-phospho-(1'-sn-glycerol).

Belongs to the Lgt family.

Its subcellular location is the cell inner membrane. The enzyme catalyses L-cysteinyl-[prolipoprotein] + a 1,2-diacyl-sn-glycero-3-phospho-(1'-sn-glycerol) = an S-1,2-diacyl-sn-glyceryl-L-cysteinyl-[prolipoprotein] + sn-glycerol 1-phosphate + H(+). Its pathway is protein modification; lipoprotein biosynthesis (diacylglyceryl transfer). Catalyzes the transfer of the diacylglyceryl group from phosphatidylglycerol to the sulfhydryl group of the N-terminal cysteine of a prolipoprotein, the first step in the formation of mature lipoproteins. The protein is Phosphatidylglycerol--prolipoprotein diacylglyceryl transferase of Shewanella sp. (strain ANA-3).